A 475-amino-acid polypeptide reads, in one-letter code: Putative UDP-glucose glucosyltransferase (475 aa).

This sequence belongs to the UDP-glycosyltransferase family.

The sequence is that of Putative UDP-glucose glucosyltransferase from Fragaria ananassa (Strawberry).